The following is a 257-amino-acid chain: NAD-capped RNA hydrolase NudC (257 aa).

Residues Lys-25 and Arg-69 each coordinate substrate. Zn(2+)-binding residues include Cys-98 and Cys-101. Position 111 (Glu-111) interacts with substrate. Residues Cys-116 and Cys-119 each coordinate Zn(2+). Residue Tyr-124 participates in substrate binding. Positions 125–248 constitute a Nudix hydrolase domain; that stretch reads PQIAPCIIVA…TVARRLIEDT (124 aa). Residues Ala-158, Glu-174, and Glu-178 each contribute to the a divalent metal cation site. Positions 159–180 match the Nudix box motif; that stretch reads GFVEVGETLEQAVAREVMEESG. Substrate is bound at residue 192-199; that stretch reads QPWPFPQS. Residue Glu-219 participates in a divalent metal cation binding. Ala-241 is a binding site for substrate.

It belongs to the Nudix hydrolase family. NudC subfamily. As to quaternary structure, homodimer. The cofactor is Mg(2+). Mn(2+) serves as cofactor. Requires Zn(2+) as cofactor.

The enzyme catalyses a 5'-end NAD(+)-phospho-ribonucleoside in mRNA + H2O = a 5'-end phospho-adenosine-phospho-ribonucleoside in mRNA + beta-nicotinamide D-ribonucleotide + 2 H(+). It carries out the reaction NAD(+) + H2O = beta-nicotinamide D-ribonucleotide + AMP + 2 H(+). The catalysed reaction is NADH + H2O = reduced beta-nicotinamide D-ribonucleotide + AMP + 2 H(+). Its function is as follows. mRNA decapping enzyme that specifically removes the nicotinamide adenine dinucleotide (NAD) cap from a subset of mRNAs by hydrolyzing the diphosphate linkage to produce nicotinamide mononucleotide (NMN) and 5' monophosphate mRNA. The NAD-cap is present at the 5'-end of some mRNAs and stabilizes RNA against 5'-processing. Has preference for mRNAs with a 5'-end purine. Catalyzes the hydrolysis of a broad range of dinucleotide pyrophosphates. The polypeptide is NAD-capped RNA hydrolase NudC (Shigella dysenteriae serotype 1 (strain Sd197)).